The chain runs to 127 residues: Small ribosomal subunit protein eS8 (127 aa).

Belongs to the eukaryotic ribosomal protein eS8 family. As to quaternary structure, part of the 30S ribosomal subunit.

The sequence is that of Small ribosomal subunit protein eS8 from Pyrococcus furiosus (strain ATCC 43587 / DSM 3638 / JCM 8422 / Vc1).